We begin with the raw amino-acid sequence, 301 residues long: GTPase Era (301 aa).

The Era-type G domain occupies 7–175 (YCGFIAIVGR…AAIVRKHLPE (169 aa)). The interval 15–22 (GRPNVGKS) is G1. 15 to 22 (GRPNVGKS) contributes to the GTP binding site. The G2 stretch occupies residues 41–45 (QTTRH). Positions 62 to 65 (DTPG) are G3. GTP-binding positions include 62–66 (DTPGL) and 124–127 (NKVD). The segment at 124-127 (NKVD) is G4. Positions 154–156 (ISA) are G5. A KH type-2 domain is found at 206–283 (LGAELPYSVT…HLELWVKVKS (78 aa)).

The protein belongs to the TRAFAC class TrmE-Era-EngA-EngB-Septin-like GTPase superfamily. Era GTPase family. In terms of assembly, monomer.

The protein localises to the cytoplasm. The protein resides in the cell inner membrane. In terms of biological role, an essential GTPase that binds both GDP and GTP, with rapid nucleotide exchange. Plays a role in 16S rRNA processing and 30S ribosomal subunit biogenesis and possibly also in cell cycle regulation and energy metabolism. This chain is GTPase Era, found in Shigella dysenteriae serotype 1 (strain Sd197).